The chain runs to 493 residues: Cytochrome P450 2A9 (493 aa).

C438 contacts heme.

It belongs to the cytochrome P450 family. The cofactor is heme. As to expression, liver.

Its subcellular location is the endoplasmic reticulum membrane. It localises to the microsome membrane. The enzyme catalyses an organic molecule + reduced [NADPH--hemoprotein reductase] + O2 = an alcohol + oxidized [NADPH--hemoprotein reductase] + H2O + H(+). Its function is as follows. Cytochromes P450 are a group of heme-thiolate monooxygenases. In liver microsomes, this enzyme is involved in an NADPH-dependent electron transport pathway. It oxidizes a variety of structurally unrelated compounds, including steroids, fatty acids, and xenobiotics. This Mesocricetus auratus (Golden hamster) protein is Cytochrome P450 2A9 (CYP2A9).